Consider the following 338-residue polypeptide: Clavatol oxidase claD (338 aa).

A Fe2OG dioxygenase domain is found at 193-299 (DPMSLLRLLH…RYSVVFFYDG (107 aa)). Fe cation-binding residues include histidine 222, aspartate 224, and histidine 280. Arginine 290 contacts 2-oxoglutarate.

The protein belongs to the iron/ascorbate-dependent oxidoreductase family. Fe(2+) serves as cofactor.

It catalyses the reaction clavatol + 2-oxoglutarate + O2 = hydroxyclavatol + succinate + CO2. It participates in secondary metabolite biosynthesis. In terms of biological role, 2-oxoglutarate-dependent dioxygenase; part of the cla gene cluster that produces clavatol and ortho-quinone methide. The clavatol biosynthesis cluster cla and the terrestric acid cluster tra are both involved in the production of peniphenones and penilactones. The non-reducing PKS claF is responsible for the formation of clavatol from successive condensations of 3 malonyl-CoA units, presumably with a simple acetyl-CoA starter unit, and 2 methylation steps. The esterase claE probably collaborates with claF by catalyzing the hydrolysis of ACP-bound acyl intermediates to free the ACP from stalled intermediates. The clavatol oxidase claD then converts clavatol to hydroxyclavatol. Spontaneous dehydration of hydroxyclavatol leads to the accumulation of the highly active ortho-quinone methide. On the other hand, the PKS-NRPS hybrid traA is involved in the formation of crustosic acid, with the help of traB and traD. The polyketide synthase module (PKS) of traA is responsible for the synthesis of the polyketide backbone via the condensation of an acetyl-CoA starter unit with 3 malonyl-CoA units. The downstream nonribosomal peptide synthetase (NRPS) module then amidates the carboxyl end of the polyketide with L-malic acid. Because traA lacks a designated enoylreductase (ER) domain, the required activity is provided the enoyl reductase traG. Crustosic acid undergoes decarboxylation and isomerization to the terrestric acid, catalyzed by the 2-oxoglutarate-dependent dioxygenase traH. Both acids are further converted to the 2 gamma-butyrolactones (R)-5-methyltetronic acid and (S)-5-carboxylmethyltetronic acid, with involvement of the cytochrome P450 monooxygenase claJ. Spontaneous addition of the methide to these gamma-butyrolactones leads to peniphenone D and penilactone D, which undergo again stereospecific attacking by methide to give penilactones A and B. In Penicillium crustosum (Blue mold fungus), this protein is Clavatol oxidase claD.